The primary structure comprises 732 residues: Alpha-galactosidase Mel36A (732 aa).

Residues 370–371, W415, R447, 480–484, 530–533, and D552 each bind substrate; these read DD, KWDMN, and CSGG. D482 serves as the catalytic Nucleophile. The active-site Proton donor is the D552.

Belongs to the glycosyl hydrolase 36 family. As to quaternary structure, homotetramer.

The catalysed reaction is Hydrolysis of terminal, non-reducing alpha-D-galactose residues in alpha-D-galactosides, including galactose oligosaccharides, galactomannans and galactolipids.. In terms of biological role, hydrolyzes the short-chain alpha-galactosaccharide raffinose. The chain is Alpha-galactosidase Mel36A from Lactobacillus acidophilus (strain ATCC 700396 / NCK56 / N2 / NCFM).